A 662-amino-acid polypeptide reads, in one-letter code: Bifunctional polymyxin resistance protein ArnA (662 aa).

The interval 1–307 is formyltransferase ArnAFT; sequence MTSKAVVFAY…ELGLVEGARL (307 aa). His-106 functions as the Proton donor; for formyltransferase activity in the catalytic mechanism. (6R)-10-formyltetrahydrofolate-binding positions include Arg-116 and 138–142; that span reads IERAD. The tract at residues 316 to 662 is dehydrogenase ArnADH; sequence RRTRVLILGV…EALREREAQA (347 aa). NAD(+)-binding positions include Asp-349 and 370–371; that span reads DI. UDP-alpha-D-glucuronate contacts are provided by residues Ala-395, Tyr-400, and 434-435; that span reads TS. Glu-436 acts as the Proton acceptor; for decarboxylase activity in catalysis. UDP-alpha-D-glucuronate-binding positions include Arg-462, Asn-493, 527 to 536, and Tyr-614; that span reads RLVDGGAQKR. The active-site Proton donor; for decarboxylase activity is Arg-620.

This sequence in the N-terminal section; belongs to the Fmt family. UDP-L-Ara4N formyltransferase subfamily. The protein in the C-terminal section; belongs to the NAD(P)-dependent epimerase/dehydratase family. UDP-glucuronic acid decarboxylase subfamily. As to quaternary structure, homohexamer, formed by a dimer of trimers.

It carries out the reaction UDP-alpha-D-glucuronate + NAD(+) = UDP-beta-L-threo-pentopyranos-4-ulose + CO2 + NADH. The catalysed reaction is UDP-4-amino-4-deoxy-beta-L-arabinose + (6R)-10-formyltetrahydrofolate = UDP-4-deoxy-4-formamido-beta-L-arabinose + (6S)-5,6,7,8-tetrahydrofolate + H(+). It participates in nucleotide-sugar biosynthesis; UDP-4-deoxy-4-formamido-beta-L-arabinose biosynthesis; UDP-4-deoxy-4-formamido-beta-L-arabinose from UDP-alpha-D-glucuronate: step 1/3. Its pathway is nucleotide-sugar biosynthesis; UDP-4-deoxy-4-formamido-beta-L-arabinose biosynthesis; UDP-4-deoxy-4-formamido-beta-L-arabinose from UDP-alpha-D-glucuronate: step 3/3. The protein operates within bacterial outer membrane biogenesis; lipopolysaccharide biosynthesis. In terms of biological role, bifunctional enzyme that catalyzes the oxidative decarboxylation of UDP-glucuronic acid (UDP-GlcUA) to UDP-4-keto-arabinose (UDP-Ara4O) and the addition of a formyl group to UDP-4-amino-4-deoxy-L-arabinose (UDP-L-Ara4N) to form UDP-L-4-formamido-arabinose (UDP-L-Ara4FN). The modified arabinose is attached to lipid A and is required for resistance to polymyxin and cationic antimicrobial peptides. This chain is Bifunctional polymyxin resistance protein ArnA, found in Pseudomonas aeruginosa (strain UCBPP-PA14).